The primary structure comprises 317 residues: 17-beta-hydroxysteroid dehydrogenase type 6 (317 aa).

Positions 1 to 17 (MWFYLVTLVGLYHLLRW) are cleaved as a signal peptide. 33–57 (FITGCDSGFGNLLARQLDRRGMRVL) contributes to the NAD(+) binding site. N-linked (GlcNAc...) asparagine glycosylation is found at Asn-71 and Asn-161. Substrate is bound at residue Ser-164. The active-site Proton acceptor is Tyr-176.

It belongs to the short-chain dehydrogenases/reductases (SDR) family. As to expression, detected in liver.

It is found in the microsome membrane. It localises to the early endosome membrane. The enzyme catalyses all-trans-retinol--[retinol-binding protein] + NAD(+) = all-trans-retinal--[retinol-binding protein] + NADH + H(+). It carries out the reaction all-trans-retinol + NAD(+) = all-trans-retinal + NADH + H(+). The catalysed reaction is androsterone + NAD(+) = 5alpha-androstan-3,17-dione + NADH + H(+). It catalyses the reaction testosterone + NAD(+) = androst-4-ene-3,17-dione + NADH + H(+). The enzyme catalyses 5alpha-androstane-3alpha,17beta-diol + NAD(+) = 17beta-hydroxy-5alpha-androstan-3-one + NADH + H(+). It carries out the reaction 17beta-estradiol + NAD(+) = estrone + NADH + H(+). The catalysed reaction is 17beta-estradiol + NADP(+) = estrone + NADPH + H(+). It catalyses the reaction 3alpha-hydroxy-5alpha-pregnan-20-one + NAD(+) = 5alpha-pregnane-3,20-dione + NADH + H(+). The enzyme catalyses 5alpha-androstane-3beta,17beta-diol + NAD(+) = 17beta-hydroxy-5alpha-androstan-3-one + NADH + H(+). It carries out the reaction 3beta-hydroxy-5alpha-androstan-17-one + NAD(+) = 5alpha-androstan-3,17-dione + NADH + H(+). Its activity is regulated as follows. Inhibited by carbenoxolone and phenyl arsenoxide. In terms of biological role, NAD-dependent oxidoreductase with broad substrate specificity that shows both oxidative and reductive activity (in vitro). Has 17-beta-hydroxysteroid dehydrogenase activity towards various steroids (in vitro). Converts 5-alpha-androstan-3-alpha,17-beta-diol to androsterone and estradiol to estrone (in vitro). Has 3-alpha-hydroxysteroid dehydrogenase activity towards androsterone (in vitro). Has retinol dehydrogenase activity towards all-trans-retinol (in vitro). This is 17-beta-hydroxysteroid dehydrogenase type 6 (Hsd17b6) from Mus musculus (Mouse).